Consider the following 546-residue polypeptide: Chaperonin GroEL (546 aa).

Residues 30 to 33, Lys-51, 87 to 91, Gly-415, 479 to 481, and Asp-495 each bind ATP; these read TLGP, DGTTT, and NAA. The tract at residues 526-546 is disordered; sequence KEDAPMPGGMPGGMGGMGMDM. The span at 534 to 546 shows a compositional bias: gly residues; that stretch reads GMPGGMGGMGMDM.

Belongs to the chaperonin (HSP60) family. As to quaternary structure, forms a cylinder of 14 subunits composed of two heptameric rings stacked back-to-back. Interacts with the co-chaperonin GroES.

Its subcellular location is the cytoplasm. It carries out the reaction ATP + H2O + a folded polypeptide = ADP + phosphate + an unfolded polypeptide.. In terms of biological role, together with its co-chaperonin GroES, plays an essential role in assisting protein folding. The GroEL-GroES system forms a nano-cage that allows encapsulation of the non-native substrate proteins and provides a physical environment optimized to promote and accelerate protein folding. The chain is Chaperonin GroEL from Burkholderia cepacia (Pseudomonas cepacia).